A 482-amino-acid chain; its full sequence is MTILNIAAVDLGASSGRVMLASYSTENHKISLEEIHRFKNQFVSQNGHECWDLAYLENEIVNGLRKISNSGRTLHSIGIDTWGVDYVLLDQNGEVVGPTYAYRDHRTDGVMQKVQAELGKEVIYRKTGIQFLTFNTLYQLKAMTDENPAWLSQVKDFVMIPDYLNYRLTGVINREYTNATTTQLVNVNIDSWDTALLDYLGLPASWFGRIRHPGHQVGLWENRVPVMSVASHDTASAVISAPLSDENAAYLCSGTWSLMGLDTTTPCTDECAMNANITNEGGIDGHYRVLKNIMGLWLFNRLCTERDVTDIPALVKQAEAELPFQSLINPNAECFLNPSSMVEAIQQYCREHNQVIPKTTAQLARCIFDSLAMLYRKVALELAGLQGKPISALHIVGGGSQNAFLNQLCADLCGIDVFAGPVEASVLGNVGCQLMALDQIHNAAEFRQLVVKNFPLKQFKKRPHFMPASDFEEKWCEFCALN.

13–17 (ASSGR) contributes to the ATP binding site. Residues Gly83 and 232–234 (HDT) contribute to the substrate site. Asp233 (proton acceptor) is an active-site residue. Thr255 provides a ligand contact to ATP. Residue Asn292 participates in substrate binding. ATP is bound at residue Asn300. Cys349 and Cys366 are disulfide-bonded. Residue Gly398 participates in ATP binding. A disulfide bridge links Cys409 with Cys413.

Belongs to the rhamnulokinase family. Requires Mg(2+) as cofactor.

The enzyme catalyses L-rhamnulose + ATP = L-rhamnulose 1-phosphate + ADP + H(+). It participates in carbohydrate degradation; L-rhamnose degradation; glycerone phosphate from L-rhamnose: step 2/3. Its function is as follows. Involved in the catabolism of L-rhamnose (6-deoxy-L-mannose). Catalyzes the transfer of the gamma-phosphate group from ATP to the 1-hydroxyl group of L-rhamnulose to yield L-rhamnulose 1-phosphate. The polypeptide is Rhamnulokinase (Mannheimia succiniciproducens (strain KCTC 0769BP / MBEL55E)).